The chain runs to 398 residues: Galactose-3-O-sulfotransferase 2 (398 aa).

The Cytoplasmic portion of the chain corresponds to 1–11; that stretch reads MLSALGGLQRC. A helical; Signal-anchor for type II membrane protein membrane pass occupies residues 12–29; sequence FWAILLLALTVSLLAGFL. Over 30 to 398 the chain is Lumenal; sequence HKDVRLLMPL…PPKNIPFLGA (369 aa). 6 N-linked (GlcNAc...) asparagine glycosylation sites follow: N77, N133, N180, N288, N330, and N360.

Belongs to the galactose-3-O-sulfotransferase family.

Its subcellular location is the golgi apparatus. The protein localises to the golgi stack membrane. The protein operates within protein modification; carbohydrate sulfation. Its activity is regulated as follows. Strongly inhibited by Cu(2+) and Zn(2+). Its function is as follows. Transfers a sulfate group to the hydroxyl group at C3 of non-reducing beta-galactosyl residues. Acts both on type 1 (Gal-beta-1,3-GlcNAc) and type 2 (Gal-beta-1,4-GlcNAc) chains with similar efficiency. In Sus scrofa (Pig), this protein is Galactose-3-O-sulfotransferase 2 (GAL3ST2).